A 221-amino-acid chain; its full sequence is Uracil-DNA glycosylase (221 aa).

Asp65 serves as the catalytic Proton acceptor.

It belongs to the uracil-DNA glycosylase (UDG) superfamily. UNG family.

It is found in the cytoplasm. It carries out the reaction Hydrolyzes single-stranded DNA or mismatched double-stranded DNA and polynucleotides, releasing free uracil.. In terms of biological role, excises uracil residues from the DNA which can arise as a result of misincorporation of dUMP residues by DNA polymerase or due to deamination of cytosine. This Flavobacterium johnsoniae (strain ATCC 17061 / DSM 2064 / JCM 8514 / BCRC 14874 / CCUG 350202 / NBRC 14942 / NCIMB 11054 / UW101) (Cytophaga johnsonae) protein is Uracil-DNA glycosylase.